Reading from the N-terminus, the 201-residue chain is dITP/XTP pyrophosphatase (201 aa).

8-13 (TTNENK) contributes to the substrate binding site. D68 functions as the Proton acceptor in the catalytic mechanism. D68 provides a ligand contact to Mg(2+). Residues S69, 155 to 158 (FGYD), K177, and 182 to 183 (HR) each bind substrate.

It belongs to the HAM1 NTPase family. As to quaternary structure, homodimer. The cofactor is Mg(2+).

The catalysed reaction is XTP + H2O = XMP + diphosphate + H(+). It carries out the reaction dITP + H2O = dIMP + diphosphate + H(+). The enzyme catalyses ITP + H2O = IMP + diphosphate + H(+). Pyrophosphatase that catalyzes the hydrolysis of nucleoside triphosphates to their monophosphate derivatives, with a high preference for the non-canonical purine nucleotides XTP (xanthosine triphosphate), dITP (deoxyinosine triphosphate) and ITP. Seems to function as a house-cleaning enzyme that removes non-canonical purine nucleotides from the nucleotide pool, thus preventing their incorporation into DNA/RNA and avoiding chromosomal lesions. This chain is dITP/XTP pyrophosphatase, found in Borrelia garinii subsp. bavariensis (strain ATCC BAA-2496 / DSM 23469 / PBi) (Borreliella bavariensis).